The sequence spans 238 residues: Uridylate kinase (238 aa).

An ATP-binding site is contributed by 12-15; that stretch reads KLSG. G54 contributes to the UMP binding site. ATP-binding residues include G55 and R59. UMP contacts are provided by residues D74 and 135 to 142; that span reads TGNPFFTT. ATP is bound by residues T162, Y168, and D171.

This sequence belongs to the UMP kinase family. In terms of assembly, homohexamer.

The protein localises to the cytoplasm. The catalysed reaction is UMP + ATP = UDP + ADP. The protein operates within pyrimidine metabolism; CTP biosynthesis via de novo pathway; UDP from UMP (UMPK route): step 1/1. Inhibited by UTP. Catalyzes the reversible phosphorylation of UMP to UDP. The protein is Uridylate kinase of Methylobacillus flagellatus (strain ATCC 51484 / DSM 6875 / VKM B-1610 / KT).